Here is a 1186-residue protein sequence, read N- to C-terminus: MKKFNFRKVLDGLTASSPGSGSSSGSNSGGGAGSGSVHPAGTAGVLREEIQETLTSEYFQICKTVRHGFPHQPTALAFDPVQKILAIGTRTGAIRILGRPGVDCYCQHESGAAVLQLQFLINEGALVSASSDDTLHLWNLRQKRPAILHSLKFNRERITYCHLPFQSKWLYVGTERGNTHIVNIESFILSGYVIMWNKAIELSTKTHPGPVVHLSDSPRDEGKLLIGYENGTVVFWDLKSKRAELRVYYDEAIHSIDWHHEGKQFMCSHSDGSLTLWNLKSPSRPFQTTIPHGKSQREGRKSESCKPILKVEYKTCKNSEPFIIFSGGLSYDKACRRPSLTIMHGKAITVLEMDHPIVEFLTLCETPYPNEFQEPYAVVVLLEKDLIVVDLTQSNFPIFENPYPMDIHESPVTCTAYFADCPPDLILVLYSIGVKHKKQGYSNKEWPISGGAWNLGAQTYPEIIITGHADGSIKFWDASAITLQMLYKLKTSKVFEKQKVGEGKQTCEIVEEDPFAIQMIYWCPESRIFCVSGVSAYVIIYKFSRHEITTEIVSLEVRLQYDVEDIITPEPETSPPFPDLSAQLPSSRSLSGSTNTVASEGVTKDSIPCLNVKTRPVRMPPGYQAELVIQLVWVDGEPPQQITSLAVSSAYGIVAFGNCNGLAVVDFIQKTVLLSMGTIDLYRSSDLYQRQPRSPRKNKQFIADNFCMRGLSNFYPDLTKRIRTSYQSLTELNDSPVPLELERCKSPTSDHVNGHCTSPTSQSCSSGKRLSSADVSKVNRWGPGRPPFRKAQSAACMEISLPVTTEENRENSYNRSRSSSISSIDKDSKEAITALYFMDSFARKNDSTISPCLFVGTSLGMVLIISLNLPLADEQRFTEPVMVLPSGTFLSLKGAVLTFSCMDRMGGLMQPPYEVWRDPNNIDENEKSWRRKVVMNSSSASQEIGDHQYTIICSEKQAKVFSLPSQTCLYVHNITETSFILQANVVVMCSSACLACFCANGHIMIMSLPSLRPMLDVNYLPLTDMRIARTFCFTNEGQALYLVSPTEIQRLTYSQEMCDNLQDMLGDLFTPIETPEAQNRGFLKGLFGGSGQTFDREELFGEASAGKASRSLAQHIPGPGSIEGMKGAAGGVMGELTRARIALDERGQRLGELEEKTAGMMTSAEAFSKHAHELMLKYKDKKWYQF.

M1 is modified (N-acetylmethionine). Residues 15 to 40 (ASSPGSGSSSGSNSGGGAGSGSVHPA) are disordered. Low complexity predominate over residues 16 to 26 (SSPGSGSSSGS). WD repeat units follow at residues 74-107 (TALA…CYCQ), 114-153 (VLQL…SLKF), 158-194 (ITYC…GYVI), 213-247 (HLSD…ELRV), 253-285 (IHSI…PSRP), 307-349 (PILK…KAIT), 357-391 (IVEF…VVDL), 413-490 (TCTA…YKLK), 518-629 (QMIY…ELVI), and 643-705 (TSLA…IADN). Phosphothreonine is present on T568. A phosphoserine mark is found at S574, S589, and S593. At T596 the chain carries Phosphothreonine. Residue S599 is modified to Phosphoserine. R709 carries the post-translational modification Omega-N-methylarginine. The segment covering 748 to 769 (TSDHVNGHCTSPTSQSCSSGKR) has biased composition (polar residues). The disordered stretch occupies residues 748–771 (TSDHVNGHCTSPTSQSCSSGKRLS). Phosphoserine occurs at positions 763, 765, 766, 771, 772, 793, 800, 812, 820, 822, and 823. WD repeat units lie at residues 832–889 (ITAL…SGTF), 898–969 (TFSC…QTCL), 974–1018 (ITET…LDVN), and 1032–1055 (CFTN…TYSQ). T1093 bears the Phosphothreonine mark. In terms of domain architecture, v-SNARE coiled-coil homology spans 1121–1181 (SIEGMKGAAG…HELMLKYKDK (61 aa)).

This sequence belongs to the WD repeat L(2)GL family. Interacts with STX1A and STX4. In terms of processing, phosphorylated, leading to STXBP5L increased turnover and subsequent de-repression of insulin secretion. Phosphorylated on serine residues in response to glucose or phorbol esters. Post-translationally, ubiquitinated by the E3 ligase SYVN1, leading to STXBP5L proteasomal degradation. Detected in kidney, hippocampus and lung carcinoma.

It is found in the cytoplasm. Its subcellular location is the cell membrane. It localises to the membrane. In terms of biological role, plays a role in vesicle trafficking and exocytosis inhibition. In pancreatic beta-cells, inhibits insulin secretion probably by interacting with and regulating STX1A and STX4, key t-SNARE proteins involved in the fusion of insulin granules to the plasma membrane. Also plays a role in neurotransmitter release by inhibiting basal acetylcholine release from axon terminals and by preventing synaptic fatigue upon repetitive stimulation. Promotes as well axonal outgrowth. This Homo sapiens (Human) protein is Syntaxin-binding protein 5-like (STXBP5L).